The following is a 377-amino-acid chain: UPF0754 membrane protein LMHCC_0318 (377 aa).

A run of 2 helical transmembrane segments spans residues 1 to 21 (MSVLFTILLMAVIGGFIGAMT) and 357 to 377 (YLGGILGGFIGVIQGILAMWI).

The protein belongs to the UPF0754 family.

The protein localises to the cell membrane. The protein is UPF0754 membrane protein LMHCC_0318 of Listeria monocytogenes serotype 4a (strain HCC23).